The following is a 284-amino-acid chain: Shikimate dehydrogenase (NADP(+)) (284 aa).

Shikimate contacts are provided by residues 20 to 22 (SIS) and Ser67. The active-site Proton acceptor is Lys71. Asp83 contacts NADP(+). Positions 92 and 107 each coordinate shikimate. NADP(+) is bound by residues 129 to 133 (GAGGA) and Ile227. Tyr229 serves as a coordination point for shikimate. An NADP(+)-binding site is contributed by Gly250.

Belongs to the shikimate dehydrogenase family. Homodimer.

The enzyme catalyses shikimate + NADP(+) = 3-dehydroshikimate + NADPH + H(+). Its pathway is metabolic intermediate biosynthesis; chorismate biosynthesis; chorismate from D-erythrose 4-phosphate and phosphoenolpyruvate: step 4/7. Its function is as follows. Involved in the biosynthesis of the chorismate, which leads to the biosynthesis of aromatic amino acids. Catalyzes the reversible NADPH linked reduction of 3-dehydroshikimate (DHSA) to yield shikimate (SA). In Streptococcus pneumoniae serotype 2 (strain D39 / NCTC 7466), this protein is Shikimate dehydrogenase (NADP(+)).